The sequence spans 1366 residues: DNA-directed RNA polymerase subunit beta'' (1366 aa).

Cysteine 220, cysteine 290, cysteine 297, and cysteine 300 together coordinate Zn(2+).

The protein belongs to the RNA polymerase beta' chain family. RpoC2 subfamily. In plastids the minimal PEP RNA polymerase catalytic core is composed of four subunits: alpha, beta, beta', and beta''. When a (nuclear-encoded) sigma factor is associated with the core the holoenzyme is formed, which can initiate transcription. It depends on Zn(2+) as a cofactor.

It localises to the plastid. It is found in the chloroplast. The catalysed reaction is RNA(n) + a ribonucleoside 5'-triphosphate = RNA(n+1) + diphosphate. DNA-dependent RNA polymerase catalyzes the transcription of DNA into RNA using the four ribonucleoside triphosphates as substrates. This chain is DNA-directed RNA polymerase subunit beta'', found in Lemna minor (Common duckweed).